A 274-amino-acid polypeptide reads, in one-letter code: NH(3)-dependent NAD(+) synthetase (274 aa).

Residue 46 to 53 participates in ATP binding; sequence GISGGQDS. Position 52 (Asp-52) interacts with Mg(2+). Position 140 (Arg-140) interacts with deamido-NAD(+). Thr-160 is an ATP binding site. Glu-165 lines the Mg(2+) pocket. 2 residues coordinate deamido-NAD(+): Lys-173 and Asp-180. ATP is bound by residues Lys-189 and Thr-211. 260-261 lines the deamido-NAD(+) pocket; it reads HK.

The protein belongs to the NAD synthetase family. As to quaternary structure, homodimer.

The catalysed reaction is deamido-NAD(+) + NH4(+) + ATP = AMP + diphosphate + NAD(+) + H(+). The protein operates within cofactor biosynthesis; NAD(+) biosynthesis; NAD(+) from deamido-NAD(+) (ammonia route): step 1/1. Catalyzes the ATP-dependent amidation of deamido-NAD to form NAD. Uses ammonia as a nitrogen source. This Streptococcus pneumoniae (strain 70585) protein is NH(3)-dependent NAD(+) synthetase.